The sequence spans 1125 residues: Angiopoietin-1 receptor (1125 aa).

Residues 1–22 (MDSLAGLVLCGVSLLLSATVDG) form the signal peptide. Over 23–748 (AMDLILINSL…PADLGGRKML (726 aa)) the chain is Extracellular. The cysteines at positions 44 and 102 are disulfide-linked. Positions 44-123 (CIASGWRPHE…RTMKMRQQAS (80 aa)) constitute an Ig-like C2-type 1 domain. Asn158 carries an N-linked (GlcNAc...) asparagine glycan. 3 EGF-like domains span residues 210-252 (RCEA…RTCE), 254-299 (ACEP…LQCN), and 301-341 (ACQP…LQCE). Intrachain disulfides connect Cys211-Cys220, Cys224-Cys233, Cys227-Cys240, Cys242-Cys251, Cys255-Cys264, Cys268-Cys274, Cys280-Cys287, Cys289-Cys298, Cys302-Cys311, Cys315-Cys323, Cys317-Cys329, Cys331-Cys340, and Cys370-Cys424. Residues 350–440 (PKIEDLPDHI…GMVEKPFNIS (91 aa)) enclose the Ig-like C2-type 2 domain. Fibronectin type-III domains follow at residues 447–541 (PLNA…TASI), 545–637 (PPRG…TLSD), and 642–735 (QPEN…TLSE). The helical transmembrane segment at 749-769 (LIAILGSAGMTCLTVLLAFLI) threads the bilayer. Residues 770–1125 (MLQLKRANVQ…GIDCSAEEAA (356 aa)) are Cytoplasmic-facing. A Protein kinase domain is found at 825 to 1097 (IKFQDVIGEG…QILVSLNRML (273 aa)). ATP-binding positions include 831 to 839 (IGEGNFGQV) and Lys856. Position 861 is a phosphotyrosine; by autocatalysis (Tyr861). Asp965 (proton acceptor) is an active-site residue. Tyr993, Tyr1103, and Tyr1109 each carry phosphotyrosine; by autocatalysis.

It belongs to the protein kinase superfamily. Tyr protein kinase family. Tie subfamily. Homodimer. Heterodimer with TIE1. Interacts with ANGPT1, ANGPT2 and ANGPT4. At cell-cell contacts in quiescent cells, forms a signaling complex composed of ANGPT1 plus TEK molecules from two adjoining cells. In the absence of endothelial cell-cell contacts, interaction with ANGPT1 mediates contacts with the extracellular matrix. Interacts (tyrosine phosphorylated) with TNIP2. Interacts (tyrosine phosphorylated) with SHC1 (via SH2 domain). Interacts with PTPRB; this promotes endothelial cell-cell adhesion. Interacts with DOK2, GRB2, GRB7, GRB14, PIK3R1 and PTPN11/SHP2. Colocalizes with DOK2 at contacts with the extracellular matrix in migrating cells. Proteolytic processing leads to the shedding of the extracellular domain (soluble TIE-2 alias sTIE-2). In terms of processing, autophosphorylated on tyrosine residues in response to ligand binding. Autophosphorylation occurs in trans, i.e. one subunit of the dimeric receptor phosphorylates tyrosine residues on the other subunit. Autophosphorylation occurs in a sequential manner, where Tyr-993 in the kinase activation loop is phosphorylated first, followed by autophosphorylation at Tyr-1109 and at additional tyrosine residues. ANGPT1-induced phosphorylation is impaired during hypoxia, due to increased expression of ANGPT2. Phosphorylation is important for interaction with GRB14, PIK3R1 and PTPN11. Phosphorylation at Tyr-1103 is important for interaction with GRB2 and GRB7. Phosphorylation at Tyr-1109 is important for interaction with DOK2 and for coupling to downstream signal transduction pathways in endothelial cells. Dephosphorylated by PTPRB. Post-translationally, ubiquitinated. The phosphorylated receptor is ubiquitinated and internalized, leading to its degradation. Specifically expressed in developing vascular endothelial cells.

The protein resides in the cell membrane. The protein localises to the cell junction. Its subcellular location is the focal adhesion. It localises to the cytoplasm. It is found in the cytoskeleton. The protein resides in the secreted. The catalysed reaction is L-tyrosyl-[protein] + ATP = O-phospho-L-tyrosyl-[protein] + ADP + H(+). With respect to regulation, angiopoietin binding leads to receptor dimerization and activation by autophosphorylation at Tyr-993 on the kinase activation loop. In terms of biological role, tyrosine-protein kinase that acts as a cell-surface receptor for ANGPT1, ANGPT2 and ANGPT4 and regulates angiogenesis, endothelial cell survival, proliferation, migration, adhesion and cell spreading, reorganization of the actin cytoskeleton, but also maintenance of vascular quiescence. Has anti-inflammatory effects by preventing the leakage of pro-inflammatory plasma proteins and leukocytes from blood vessels. Required for normal angiogenesis and heart development during embryogenesis. Required for post-natal hematopoiesis. After birth, activates or inhibits angiogenesis, depending on the context. Inhibits angiogenesis and promotes vascular stability in quiescent vessels, where endothelial cells have tight contacts. In quiescent vessels, ANGPT1 oligomers recruit TEK to cell-cell contacts, forming complexes with TEK molecules from adjoining cells, and this leads to preferential activation of phosphatidylinositol 3-kinase and the AKT1 signaling cascades. In migrating endothelial cells that lack cell-cell adhesions, ANGT1 recruits TEK to contacts with the extracellular matrix, leading to the formation of focal adhesion complexes, activation of PTK2/FAK and of the downstream kinases MAPK1/ERK2 and MAPK3/ERK1, and ultimately to the stimulation of sprouting angiogenesis. ANGPT1 signaling triggers receptor dimerization and autophosphorylation at specific tyrosine residues that then serve as binding sites for scaffold proteins and effectors. Signaling is modulated by ANGPT2 that has lower affinity for TEK, can promote TEK autophosphorylation in the absence of ANGPT1, but inhibits ANGPT1-mediated signaling by competing for the same binding site. Signaling is also modulated by formation of heterodimers with TIE1, and by proteolytic processing that gives rise to a soluble TEK extracellular domain. The soluble extracellular domain modulates signaling by functioning as decoy receptor for angiopoietins. TEK phosphorylates DOK2, GRB7, GRB14, PIK3R1, SHC1 and TIE1. In Bos taurus (Bovine), this protein is Angiopoietin-1 receptor (TEK).